The chain runs to 236 residues: Leucyl/phenylalanyl-tRNA--protein transferase (236 aa).

Residues 1–13 show a composition bias toward polar residues; the sequence is MNSLSYLNQDQQS. A disordered region spans residues 1 to 22; sequence MNSLSYLNQDQQSFPPPEQALS.

This sequence belongs to the L/F-transferase family.

It is found in the cytoplasm. The enzyme catalyses N-terminal L-lysyl-[protein] + L-leucyl-tRNA(Leu) = N-terminal L-leucyl-L-lysyl-[protein] + tRNA(Leu) + H(+). It catalyses the reaction N-terminal L-arginyl-[protein] + L-leucyl-tRNA(Leu) = N-terminal L-leucyl-L-arginyl-[protein] + tRNA(Leu) + H(+). The catalysed reaction is L-phenylalanyl-tRNA(Phe) + an N-terminal L-alpha-aminoacyl-[protein] = an N-terminal L-phenylalanyl-L-alpha-aminoacyl-[protein] + tRNA(Phe). In terms of biological role, functions in the N-end rule pathway of protein degradation where it conjugates Leu, Phe and, less efficiently, Met from aminoacyl-tRNAs to the N-termini of proteins containing an N-terminal arginine or lysine. This is Leucyl/phenylalanyl-tRNA--protein transferase from Shewanella piezotolerans (strain WP3 / JCM 13877).